The following is a 460-amino-acid chain: Argininosuccinate lyase (460 aa).

It belongs to the lyase 1 family. Argininosuccinate lyase subfamily.

It localises to the cytoplasm. It carries out the reaction 2-(N(omega)-L-arginino)succinate = fumarate + L-arginine. It functions in the pathway amino-acid biosynthesis; L-arginine biosynthesis; L-arginine from L-ornithine and carbamoyl phosphate: step 3/3. The sequence is that of Argininosuccinate lyase from Alteromonas mediterranea (strain DSM 17117 / CIP 110805 / LMG 28347 / Deep ecotype).